Reading from the N-terminus, the 322-residue chain is uncharacterized protein (322 aa).

Disordered regions lie at residues 1 to 51 (MARS…GAWA) and 107 to 130 (QERQNVEGGPEGLHLEPGNEDRPD). The segment covering 119 to 130 (LHLEPGNEDRPD) has biased composition (basic and acidic residues).

In terms of tissue distribution, expressed in skin and fetal lung.

This is an uncharacterized protein from Homo sapiens (Human).